We begin with the raw amino-acid sequence, 387 residues long: Exodeoxyribonuclease 7 large subunit (387 aa).

This sequence belongs to the XseA family. In terms of assembly, heterooligomer composed of large and small subunits.

It is found in the cytoplasm. It catalyses the reaction Exonucleolytic cleavage in either 5'- to 3'- or 3'- to 5'-direction to yield nucleoside 5'-phosphates.. In terms of biological role, bidirectionally degrades single-stranded DNA into large acid-insoluble oligonucleotides, which are then degraded further into small acid-soluble oligonucleotides. This Campylobacter jejuni subsp. jejuni serotype O:2 (strain ATCC 700819 / NCTC 11168) protein is Exodeoxyribonuclease 7 large subunit.